Consider the following 672-residue polypeptide: UvrABC system protein B (672 aa).

The 158-residue stretch at Glu26–Arg183 folds into the Helicase ATP-binding domain. Residue Gly39–Thr46 participates in ATP binding. A Beta-hairpin motif is present at residues Tyr92–Val115. Positions Gln431–Leu597 constitute a Helicase C-terminal domain. Positions Asp601–Tyr623 are disordered. The region spanning Glu632–Gln667 is the UVR domain.

It belongs to the UvrB family. As to quaternary structure, forms a heterotetramer with UvrA during the search for lesions. Interacts with UvrC in an incision complex.

The protein resides in the cytoplasm. Functionally, the UvrABC repair system catalyzes the recognition and processing of DNA lesions. A damage recognition complex composed of 2 UvrA and 2 UvrB subunits scans DNA for abnormalities. Upon binding of the UvrA(2)B(2) complex to a putative damaged site, the DNA wraps around one UvrB monomer. DNA wrap is dependent on ATP binding by UvrB and probably causes local melting of the DNA helix, facilitating insertion of UvrB beta-hairpin between the DNA strands. Then UvrB probes one DNA strand for the presence of a lesion. If a lesion is found the UvrA subunits dissociate and the UvrB-DNA preincision complex is formed. This complex is subsequently bound by UvrC and the second UvrB is released. If no lesion is found, the DNA wraps around the other UvrB subunit that will check the other stand for damage. The polypeptide is UvrABC system protein B (Edwardsiella ictaluri (strain 93-146)).